The primary structure comprises 261 residues: uncharacterized protein (261 aa).

Positions 1 to 22 are cleaved as a signal peptide; sequence MRYLKKVTIYISLLILTIFIGG. Cys23 is lipidated: N-palmitoyl cysteine. Cys23 is lipidated: S-diacylglycerol cysteine.

It belongs to the staphylococcal tandem lipoprotein family.

The protein localises to the cell membrane. This is an uncharacterized protein from Staphylococcus epidermidis (strain ATCC 35984 / DSM 28319 / BCRC 17069 / CCUG 31568 / BM 3577 / RP62A).